Consider the following 189-residue polypeptide: Inner membrane-spanning protein YciB (189 aa).

The next 5 membrane-spanning stretches (helical) occupy residues 4-24 (FFEF…DIYI), 53-73 (ITFG…DDVF), 76-96 (WKVT…QFFY), 121-141 (MAWA…AFSL), and 149-169 (FKVF…GLYI).

It belongs to the YciB family.

It is found in the cell inner membrane. In terms of biological role, plays a role in cell envelope biogenesis, maintenance of cell envelope integrity and membrane homeostasis. The polypeptide is Inner membrane-spanning protein YciB (Psychromonas ingrahamii (strain DSM 17664 / CCUG 51855 / 37)).